Reading from the N-terminus, the 624-residue chain is Prickle planar cell polarity protein 3 (624 aa).

Residues 1–12 show a composition bias toward basic residues; sequence MFARGSRRRRSG. A disordered region spans residues 1–26; it reads MFARGSRRRRSGRAPPEAEDPARGQP. Residues 74-182 form the PET domain; that stretch reads SDFQRHSISD…TVRIFPVTIT (109 aa). 3 consecutive LIM zinc-binding domains span residues 184–249, 250–309, and 310–373; these read AICE…CLRP, RCQA…RHAE, and YCDG…SETT. The disordered stretch occupies residues 371-617; that stretch reads ETTAPGPGRR…SHPVMPRQTR (247 aa). Positions 383 to 409 are enriched in low complexity; it reads SAGTVTTPLTTSTASFSATEGTSETAS. Residues 447–458 show a composition bias toward pro residues; the sequence is PEPPTESPGHPA. Phosphoserine occurs at positions 475 and 491. The span at 509–541 shows a compositional bias: basic residues; the sequence is SCHHHHHHRRRRQRHRRRGSHHHHHHPGRHGHH. Residues 545 to 564 show a composition bias toward low complexity; the sequence is LGSGSDSGSCSSSPSSPSSE. Positions 587 to 601 are enriched in polar residues; it reads RTTQDTSTETFNSPA.

Belongs to the prickle / espinas / testin family. As to quaternary structure, interacts with VANGL2 via its C-terminus. The VANGL2-dependent membrane recruitment of PRICKLE3 is a prerequisite for its polarization. Interacts with WTIP. WTIP is involved in the recruitment of PRICKLE3 to the basal body. Interacts with MT-ATP8, a component of the mitochondrial complex V. As to expression, widely expressed.

The protein resides in the cytoplasm. It localises to the cell membrane. The protein localises to the mitochondrion. Its function is as follows. Involved in the planar cell polarity (PCP) pathway that is essential for the polarization of epithelial cells during morphogenetic processes, including gastrulation and neurulation. PCP is maintained by two molecular modules, the global and the core modules, PRICKLE3 being part of the core module. Distinct complexes of the core module segregate to opposite sides of the cell, where they interact with the opposite complex in the neighboring cell at or near the adherents junctions. Involved in the organization of the basal body. Involved in cilia growth and positioning. Required for proper assembly, stability, and function of mitochondrial membrane ATP synthase (mitochondrial complex V). In Mus musculus (Mouse), this protein is Prickle planar cell polarity protein 3.